An 85-amino-acid polypeptide reads, in one-letter code: Neurtoxin 10 (85 aa).

The N-terminal stretch at 1–23 (MKFCVAVSLLIIASMAGVISVSG) is a signal peptide. Residues 24 to 85 (YDVYPRDYAE…NFLSVIWKHC (62 aa)) form the LCN-type CS-alpha/beta domain. Cystine bridges form between cysteine 38–cysteine 60, cysteine 46–cysteine 65, and cysteine 50–cysteine 67.

It belongs to the long (3 C-C) scorpion toxin superfamily. Expressed by the venom gland.

The protein resides in the secreted. This Lychas mucronatus (Chinese swimming scorpion) protein is Neurtoxin 10.